The chain runs to 459 residues: Alcohol acyl transferase 1 allele GSd (459 aa).

Catalysis depends on proton acceptor residues histidine 164 and asparagine 385.

The protein belongs to the plant acyltransferase family. In terms of tissue distribution, expressed at very low levels in the cortex and skin of ripe fruit.

In terms of biological role, involved in the biosynthesis of volatile esters which confer ripe apple fruit flavor. Alcohol acyl transferase that can use a wide range of alcohols as substrate to produce esters. The protein is Alcohol acyl transferase 1 allele GSd of Malus domestica (Apple).